A 363-amino-acid polypeptide reads, in one-letter code: UDP-N-acetylglucosamine--N-acetylmuramyl-(pentapeptide) pyrophosphoryl-undecaprenol N-acetylglucosamine transferase (363 aa).

UDP-N-acetyl-alpha-D-glucosamine-binding positions include 14–16 (TGG), asparagine 122, arginine 163, serine 190, and glutamine 285.

This sequence belongs to the glycosyltransferase 28 family. MurG subfamily.

It localises to the cell inner membrane. It catalyses the reaction di-trans,octa-cis-undecaprenyl diphospho-N-acetyl-alpha-D-muramoyl-L-alanyl-D-glutamyl-meso-2,6-diaminopimeloyl-D-alanyl-D-alanine + UDP-N-acetyl-alpha-D-glucosamine = di-trans,octa-cis-undecaprenyl diphospho-[N-acetyl-alpha-D-glucosaminyl-(1-&gt;4)]-N-acetyl-alpha-D-muramoyl-L-alanyl-D-glutamyl-meso-2,6-diaminopimeloyl-D-alanyl-D-alanine + UDP + H(+). It functions in the pathway cell wall biogenesis; peptidoglycan biosynthesis. Cell wall formation. Catalyzes the transfer of a GlcNAc subunit on undecaprenyl-pyrophosphoryl-MurNAc-pentapeptide (lipid intermediate I) to form undecaprenyl-pyrophosphoryl-MurNAc-(pentapeptide)GlcNAc (lipid intermediate II). In Prochlorococcus marinus (strain MIT 9301), this protein is UDP-N-acetylglucosamine--N-acetylmuramyl-(pentapeptide) pyrophosphoryl-undecaprenol N-acetylglucosamine transferase.